A 330-amino-acid chain; its full sequence is Phytanoyl-CoA hydroxylase-interacting protein (330 aa).

Residues 6-115 form the Fibronectin type-III domain; that stretch reads TPHSIEVSNI…ETVEFCTGDY (110 aa). Asn-14 and Asn-325 each carry an N-linked (GlcNAc...) asparagine glycan.

The protein belongs to the PHYHIP family. Interacts with PHYH and ADGRB1.

In terms of biological role, its interaction with PHYH suggests a role in the development of the central system. The sequence is that of Phytanoyl-CoA hydroxylase-interacting protein (PHYHIP) from Bos taurus (Bovine).